Consider the following 148-residue polypeptide: Small ribosomal subunit protein uS13 (148 aa).

Belongs to the universal ribosomal protein uS13 family. Part of the 30S ribosomal subunit. Forms a loose heterodimer with protein S19. Forms two bridges to the 50S subunit in the 70S ribosome.

In terms of biological role, located at the top of the head of the 30S subunit, it contacts several helices of the 16S rRNA. In the 70S ribosome it contacts the 23S rRNA (bridge B1a) and protein L5 of the 50S subunit (bridge B1b), connecting the 2 subunits; these bridges are implicated in subunit movement. The sequence is that of Small ribosomal subunit protein uS13 from Pyrococcus abyssi (strain GE5 / Orsay).